Consider the following 1105-residue polypeptide: Tubulin-folding cofactor D (1105 aa).

Residues Asn-122 and Asn-126 are each glycosylated (N-linked (GlcNAc...) asparagine). 4 HEAT repeats span residues 308–345, 347–385, 401–446, and 452–489; these read IYLE…RLPW, LAEQ…WHGA, SKCL…CYSK, and LQTN…RHAS. N-linked (GlcNAc...) asparagine glycosylation occurs at Asn-373. N-linked (GlcNAc...) asparagine glycans are attached at residues Asn-721, Asn-883, and Asn-1083.

As to quaternary structure, interacts with alp21.

The protein resides in the cytoplasm. It is found in the cytoskeleton. Functionally, has a function in the folding of beta-tubulin. Microtubule-associated protein that is essential to direct polarized cell growth and to position the nucleus and septum to the center of the cell during mitosis. The polypeptide is Tubulin-folding cofactor D (alp1) (Schizosaccharomyces pombe (strain 972 / ATCC 24843) (Fission yeast)).